We begin with the raw amino-acid sequence, 652 residues long: Nitrate reductase-like protein NarX (652 aa).

A nitrate reductase alpha subunit region spans residues 1–251; it reads MTVTPRTGSR…FGDQTDVPES (251 aa). The 4Fe-4S Mo/W bis-MGD-type domain occupies 53–117; that stretch reads DKVVRSTHGV…AFSWYTYSPT (65 aa). Residues His-60, Cys-64, Cys-68, and Cys-103 each coordinate [4Fe-4S] cluster. Asp-233 provides a ligand contact to Mo-bis(molybdopterin guanine dinucleotide). The tract at residues 258–415 is nitrate reductase delta subunit; the sequence is VWQCASVLLT…TVAAVCRTGD (158 aa). 5 helical membrane-spanning segments follow: residues 416-436, 466-486, 504-524, 545-565, and 595-615; these read MMGELFWTVVPYVTMTIVAVG, PMFHFGILVVIVGHGIGLVIP, AVVLGSIAGITTLAGVTLLIY, LVLVAAIVAGLGATALGSGVV, and APLYYQIHVLIGLALFALWPF. The interval 416–652 is nitrate reductase gamma subunit; the sequence is MMGELFWTVV…VLTRPRRRGW (237 aa). The heme b site is built by His-469 and His-479. Heme b-binding residues include His-602 and His-620.

The protein in the N-terminal section; belongs to the nitrate reductase alpha subunit family. It in the central section; belongs to the NarJ/NarW family. This sequence in the C-terminal section; belongs to the nitrate reductase gamma subunit family. It depends on [4Fe-4S] cluster as a cofactor. The cofactor is Mo-bis(molybdopterin guanine dinucleotide). Heme b is required as a cofactor.

The protein localises to the cell membrane. Its function is as follows. Does not seem to have nitrate reductase activity. The protein is Nitrate reductase-like protein NarX (narX) of Mycobacterium tuberculosis (strain CDC 1551 / Oshkosh).